The chain runs to 210 residues: Large ribosomal subunit protein uL4 (210 aa).

Positions 56–80 (FVSGGGKKPWRQKGTGRARAGSTRS) are disordered.

The protein belongs to the universal ribosomal protein uL4 family. In terms of assembly, part of the 50S ribosomal subunit.

Its function is as follows. One of the primary rRNA binding proteins, this protein initially binds near the 5'-end of the 23S rRNA. It is important during the early stages of 50S assembly. It makes multiple contacts with different domains of the 23S rRNA in the assembled 50S subunit and ribosome. Functionally, forms part of the polypeptide exit tunnel. The sequence is that of Large ribosomal subunit protein uL4 from Solidesulfovibrio magneticus (strain ATCC 700980 / DSM 13731 / RS-1) (Desulfovibrio magneticus).